A 175-amino-acid polypeptide reads, in one-letter code: Adenine phosphoribosyltransferase (175 aa).

This sequence belongs to the purine/pyrimidine phosphoribosyltransferase family. Homodimer.

Its subcellular location is the cytoplasm. It carries out the reaction AMP + diphosphate = 5-phospho-alpha-D-ribose 1-diphosphate + adenine. Its pathway is purine metabolism; AMP biosynthesis via salvage pathway; AMP from adenine: step 1/1. Functionally, catalyzes a salvage reaction resulting in the formation of AMP, that is energically less costly than de novo synthesis. The sequence is that of Adenine phosphoribosyltransferase from Synechococcus sp. (strain JA-3-3Ab) (Cyanobacteria bacterium Yellowstone A-Prime).